We begin with the raw amino-acid sequence, 299 residues long: ATP phosphoribosyltransferase (299 aa).

This sequence belongs to the ATP phosphoribosyltransferase family. Long subfamily. In terms of assembly, equilibrium between an active dimeric form, an inactive hexameric form and higher aggregates. Interconversion between the various forms is largely reversible and is influenced by the natural substrates and inhibitors of the enzyme. Mg(2+) serves as cofactor.

It is found in the cytoplasm. The enzyme catalyses 1-(5-phospho-beta-D-ribosyl)-ATP + diphosphate = 5-phospho-alpha-D-ribose 1-diphosphate + ATP. Its pathway is amino-acid biosynthesis; L-histidine biosynthesis; L-histidine from 5-phospho-alpha-D-ribose 1-diphosphate: step 1/9. Feedback inhibited by histidine. Functionally, catalyzes the condensation of ATP and 5-phosphoribose 1-diphosphate to form N'-(5'-phosphoribosyl)-ATP (PR-ATP). Has a crucial role in the pathway because the rate of histidine biosynthesis seems to be controlled primarily by regulation of HisG enzymatic activity. The chain is ATP phosphoribosyltransferase from Pectobacterium carotovorum subsp. carotovorum (strain PC1).